The primary structure comprises 152 residues: Antiholin-like protein LrgA (152 aa).

4 helical membrane-spanning segments follow: residues tyrosine 23–glutamate 43, phenylalanine 45–cysteine 65, valine 77–isoleucine 97, and isoleucine 108–serine 128.

Belongs to the CidA/LrgA family. LrgA subfamily.

It is found in the cell membrane. In terms of biological role, inhibits the expression or activity of extracellular murein hydrolases by interacting, possibly with LrgB, with the holin-like proteins CidA and/or CidB. The LrgAB and CidAB proteins may affect the proton motive force of the membrane. May be involved in programmed cell death (PCD), possibly triggering PCD in response to antibiotics and environmental stresses. This chain is Antiholin-like protein LrgA, found in Staphylococcus epidermidis (strain ATCC 12228 / FDA PCI 1200).